We begin with the raw amino-acid sequence, 339 residues long: Dihydroorotase (339 aa).

Positions 12 and 14 each coordinate Zn(2+). Residues 14 to 16 (HVR) and Asn40 contribute to the substrate site. Zn(2+)-binding residues include Lys94, His133, His167, and Asp239. At Lys94 the chain carries N6-carboxylysine. Residue His133 coordinates substrate. Residue Asp239 is part of the active site. Substrate contacts are provided by His243 and Ala255.

Belongs to the metallo-dependent hydrolases superfamily. DHOase family. Class II DHOase subfamily. Homodimer. It depends on Zn(2+) as a cofactor.

The catalysed reaction is (S)-dihydroorotate + H2O = N-carbamoyl-L-aspartate + H(+). It functions in the pathway pyrimidine metabolism; UMP biosynthesis via de novo pathway; (S)-dihydroorotate from bicarbonate: step 3/3. Functionally, catalyzes the reversible cyclization of carbamoyl aspartate to dihydroorotate. The sequence is that of Dihydroorotase from Helicobacter pylori (strain ATCC 700392 / 26695) (Campylobacter pylori).